We begin with the raw amino-acid sequence, 859 residues long: Chitin synthase 1 (859 aa).

The segment at 1 to 22 is disordered; it reads MRRWFKKTLPRPPDEEESAGLT. The next 5 membrane-spanning stretches (helical) occupy residues 544–564, 615–635, 662–682, 793–813, and 833–853; these read LATI…FYIL, MVIM…WIAY, FINI…VSII, YVVL…LSIP, and LWSV…YLFI.

Belongs to the chitin synthase family.

It localises to the cell membrane. It carries out the reaction [(1-&gt;4)-N-acetyl-beta-D-glucosaminyl](n) + UDP-N-acetyl-alpha-D-glucosamine = [(1-&gt;4)-N-acetyl-beta-D-glucosaminyl](n+1) + UDP + H(+). Functionally, polymerizes chitin, a structural polymer of the cell wall and septum, by transferring the sugar moiety of UDP-GlcNAc to the non-reducing end of the growing chitin polymer. The protein is Chitin synthase 1 (chs1) of Schizosaccharomyces pombe (strain 972 / ATCC 24843) (Fission yeast).